A 482-amino-acid chain; its full sequence is QWRF motif-containing protein 3 (482 aa).

Residues 1-20 (MKSCEHELLKTRRGKSREVS) show a composition bias toward basic and acidic residues. Disordered regions lie at residues 1 to 60 (MKSC…GLKK) and 171 to 220 (TAKP…QWAL). Positions 21–42 (SRFLSSPSASSSPNRRNSTSNS) are enriched in low complexity. The span at 191 to 219 (RTNSSKGIENRLQRNNSVSRYGSSMSQWA) shows a compositional bias: polar residues. Positions 292-295 (QWRF) match the QWRF motif motif.

It belongs to the QWRF family.

The polypeptide is QWRF motif-containing protein 3 (QWRF3) (Arabidopsis thaliana (Mouse-ear cress)).